Reading from the N-terminus, the 176-residue chain is Nascent polypeptide-associated complex subunit alpha (176 aa).

The region spanning 16-80 (PKNEKKAREL…AKVDDMNQRI (65 aa)) is the NAC-A/B domain. The disordered stretch occupies residues 83–110 (AQAAQAAETDAHAGHTHSHGEEDKSPEA). Basic and acidic residues predominate over residues 91–110 (TDAHAGHTHSHGEEDKSPEA). The region spanning 138–175 (LDAKDIDIIVEQTQVSRAKAVKALRKHDGDMVNAIMEL) is the UBA domain.

Belongs to the NAC-alpha family. Part of the nascent polypeptide-associated complex (NAC), consisting of EGD2 and EGD1. NAC associates with ribosomes via EGD1.

The protein resides in the cytoplasm. It localises to the nucleus. In terms of biological role, component of the nascent polypeptide-associated complex (NAC), a dynamic component of the ribosomal exit tunnel, protecting the emerging polypeptides from interaction with other cytoplasmic proteins to ensure appropriate nascent protein targeting. The NAC complex also promotes mitochondrial protein import by enhancing productive ribosome interactions with the outer mitochondrial membrane and blocks the inappropriate interaction of ribosomes translating non-secretory nascent polypeptides with translocation sites in the membrane of the endoplasmic reticulum. EGD2 may also be involved in transcription regulation. The protein is Nascent polypeptide-associated complex subunit alpha (EGD2) of Scheffersomyces stipitis (strain ATCC 58785 / CBS 6054 / NBRC 10063 / NRRL Y-11545) (Yeast).